The chain runs to 73 residues: DNA gyrase inhibitor YacG (73 aa).

Residues Cys-14, Cys-17, Cys-30, and Cys-34 each coordinate Zn(2+). Positions 54-73 are disordered; sequence AEQADDTAGPGAAEDDTDSH.

Belongs to the DNA gyrase inhibitor YacG family. In terms of assembly, interacts with GyrB. The cofactor is Zn(2+).

In terms of biological role, inhibits all the catalytic activities of DNA gyrase by preventing its interaction with DNA. Acts by binding directly to the C-terminal domain of GyrB, which probably disrupts DNA binding by the gyrase. In Hyphomonas neptunium (strain ATCC 15444), this protein is DNA gyrase inhibitor YacG.